The chain runs to 118 residues: Ly-6/neurotoxin-like protein 1 (118 aa).

The N-terminal stretch at 1–22 is a signal peptide; that stretch reads MTPLLTLFLVVLMGLPLAPVQA. Positions 23–107 constitute a UPAR/Ly6 domain; sequence LDCHVCAYNG…LAIPATLALA (85 aa). Intrachain disulfides connect C25–C48, C28–C35, C41–C66, C70–C87, and C88–C93. A lipid anchor (GPI-anchor amidated serine) is attached at S95. Residues 96–118 constitute a propeptide, removed in mature form; sequence AGLAIPATLALAPVLLATLWGLL.

Interacts with nAChRs containing alpha-4:beta-2 (CHRNA4:CHRNB2) and alpha-7 (CHRNA7) subunits. Interacts with CHRNA4 probably in the endoplasmic reticulum prior to nAChR pentameric assembly. Interacts with KCNA2/Potassium voltage-gated channel subfamily A member 2. As to expression, expressed in lung predominantly in airway epithelial cells, submucous glands, and smooth muscle cells, in endothelial and smooth muscle cells in vessel walls and in alveolar type II cells (at protein level). Also expressed in brain.

The protein localises to the cell membrane. It localises to the cell projection. It is found in the dendrite. Its subcellular location is the endoplasmic reticulum. Its function is as follows. Acts in different tissues through interaction to nicotinic acetylcholine receptors (nAChRs). The proposed role as modulator of nAChR activity seems to be dependent on the nAChR subtype and stoichiometry, and to involve an effect on nAChR trafficking and its cell surface expression, and on single channel properties of the nAChR inserted in the plasma membrane. Modulates functional properties of nicotinic acetylcholine receptors (nAChRs) to prevent excessive excitation, and hence neurodegeneration. Enhances desensitization by increasing both the rate and extent of desensitization of alpha-4:beta-2-containing nAChRs and slowing recovery from desensitization. Promotes large amplitude ACh-evoked currents through alpha-4:beta-2 nAChRs. Is involved in regulation of the nAChR pentameric assembly in the endoplasmic reticulum. Shifts stoichiometry from high sensitivity alpha-4(2):beta-2(3) to low sensitivity alpha-4(3):beta-2(2) nAChR. In vitro modulates alpha-3:beta-4-containing nAChRs. Reduces cell surface expression of (alpha-3:beta-4)(2):beta-4 and (alpha-3:beta-4)(2):alpha-5 nAChRs suggesting an interaction with nAChR alpha-3(-):(+)beta-4 subunit interfaces and an allosteric mode. Corresponding single channel effects characterized by decreased unitary conductance, altered burst proportions and enhanced desensitization/inactivation seem to depend on nAChR alpha:alpha subunit interfaces and are greater in (alpha-3:beta-2)(2):alpha-3 when compared to (alpha-3:beta-2)(2):alpha-5 nAChRs. Prevents plasticity in the primary visual cortex late in life. The chain is Ly-6/neurotoxin-like protein 1 from Macaca mulatta (Rhesus macaque).